The following is an 886-amino-acid chain: Translation initiation factor IF-2 (886 aa).

Disordered stretches follow at residues 46–91 and 121–297; these read LDHL…VEVR and EQQK…HGFT. Positions 72-82 are enriched in polar residues; that stretch reads STLSVTGSTGK. 3 stretches are compositionally biased toward basic and acidic residues: residues 130–163, 175–239, and 246–260; these read AELK…AERK, AKSE…DHHL, and REAE…EQGT. The region spanning 386–555 is the tr-type G domain; that stretch reads PRAPVVTVMG…LNQSELLELT (170 aa). Residues 395 to 402 form a G1 region; sequence GHVDHGKT. Residue 395–402 participates in GTP binding; sequence GHVDHGKT. The tract at residues 420-424 is G2; the sequence is GITQH. The G3 stretch occupies residues 441–444; it reads DTPG. GTP contacts are provided by residues 441 to 445 and 495 to 498; these read DTPGH and NKMD. The tract at residues 495 to 498 is G4; it reads NKMD. The G5 stretch occupies residues 531 to 533; that stretch reads SAK.

Belongs to the TRAFAC class translation factor GTPase superfamily. Classic translation factor GTPase family. IF-2 subfamily.

It is found in the cytoplasm. In terms of biological role, one of the essential components for the initiation of protein synthesis. Protects formylmethionyl-tRNA from spontaneous hydrolysis and promotes its binding to the 30S ribosomal subunits. Also involved in the hydrolysis of GTP during the formation of the 70S ribosomal complex. The polypeptide is Translation initiation factor IF-2 (Pseudoalteromonas translucida (strain TAC 125)).